The primary structure comprises 778 residues: Endonuclease MutS2 (778 aa).

328–335 (GPNTGGKT) contributes to the ATP binding site. Residues 702 to 777 (LDLRGKRYEE…GSGATIVTFK (76 aa)) form the Smr domain.

Belongs to the DNA mismatch repair MutS family. MutS2 subfamily. In terms of assembly, homodimer. Binds to stalled ribosomes, contacting rRNA.

Its function is as follows. Endonuclease that is involved in the suppression of homologous recombination and thus may have a key role in the control of bacterial genetic diversity. Functionally, acts as a ribosome collision sensor, splitting the ribosome into its 2 subunits. Detects stalled/collided 70S ribosomes which it binds and splits by an ATP-hydrolysis driven conformational change. Acts upstream of the ribosome quality control system (RQC), a ribosome-associated complex that mediates the extraction of incompletely synthesized nascent chains from stalled ribosomes and their subsequent degradation. Probably generates substrates for RQC. This chain is Endonuclease MutS2, found in Streptococcus pneumoniae (strain Hungary19A-6).